Here is a 168-residue protein sequence, read N- to C-terminus: Cyclin-dependent kinase 4 inhibitor C (168 aa).

ANK repeat units lie at residues 4 to 33 (PWGNELASAAARGDLEQLTSLLQNNVNVNA), 37 to 65 (FGRTALQVMKLGNPEIARRLLLRGANPDL), 69 to 98 (TGFAVIHDAARAGFLDTLQTLLEFQADVNI), and 102 to 132 (EGNLPLHLAAKEGHLRVVEFLVKHTASNVGH).

This sequence belongs to the CDKN2 cyclin-dependent kinase inhibitor family. As to quaternary structure, heterodimer of p18 with CDK6. Highest levels found in skeletal muscle. Also found in pancreas and heart.

In terms of biological role, interacts strongly with CDK6, weakly with CDK4. Inhibits cell growth and proliferation with a correlated dependence on endogenous retinoblastoma protein RB. The sequence is that of Cyclin-dependent kinase 4 inhibitor C (CDKN2C) from Homo sapiens (Human).